The following is a 751-amino-acid chain: Amyloid-beta precursor protein (751 aa).

An N-terminal signal peptide occupies residues 1–17; it reads MLPGLALLLLAAWTARA. The Extracellular portion of the chain corresponds to 18 to 682; sequence LEVPTDGNAG…AEDVGSNKGA (665 aa). The GFLD subdomain stretch occupies residues 28–123; that stretch reads LLAEPQIAMF…PYRCLVGEFV (96 aa). Residues 28–189 enclose the E1 domain; it reads LLAEPQIAMF…RGVEFVCCPL (162 aa). Cystine bridges form between C38-C62, C73-C117, C98-C105, C133-C187, C144-C174, and C158-C186. Residue 96-110 coordinates heparin; that stretch reads NWCKRDRKQCKTHPH. A cuBD subdomain region spans residues 131 to 189; the sequence is DKCKFLHQERMDVCETHLHWHTVAKETCSEKSTNLHDYGMLLPCGIDKFRGVEFVCCPL. Positions 147, 151, and 168 each coordinate Cu(2+). Positions 181–188 are zinc-binding; sequence GVEFVCCP. Residues E183, C186, and C187 each coordinate Zn(2+). Residues 195–284 form a disordered region; sequence HVDSADAEED…TTTTTTESVE (90 aa). A phosphoserine; by CK1 and CK2 mark is found at S198 and S206. Y217 and Y262 each carry sulfotyrosine. The span at 228-264 shows a compositional bias: acidic residues; the sequence is VAEEEEVAEVEEEEADDDEDDEDGDEVEEEAEEPYEE. A compositionally biased stretch (low complexity) spans 268–281; the sequence is RTTSIATTTTTTTE. Disulfide bonds link C291–C341, C300–C324, and C316–C337. Residues 291 to 341 form the BPTI/Kunitz inhibitor domain; that stretch reads CSEQAETGPCRAMISRWYFDVTEGKCAPFFYGGCGGNRNNFDTEEYCMAVC. 2 heparin-binding regions span residues 316 to 344 and 363 to 428; these read CAPF…CGSV and PGDE…QEAA. A Sulfotyrosine modification is found at Y336. Residues 344–346 carry the OX-2 motif; that stretch reads VIP. Residues 355–546 enclose the E2 domain; the sequence is AVDKYLETPG…EEIQDEVDEL (192 aa). Phosphoserine is present on S422. At Y478 the chain carries Phosphotyrosine. Residues 504 to 521 are collagen-binding; the sequence is AAQIRSQVMTHLRVIYER. N-linked (GlcNAc...) asparagine glycans are attached at residues N523 and N552. Positions 658, 662, 665, and 666 each coordinate Cu(2+). 4 residues coordinate Zn(2+): H658, Y662, H665, and H666. An interaction with PSEN1 region spans residues 676–703; sequence VGSNKGAIIGLMVGGVVIATVIVITLVM. Residues 683–703 traverse the membrane as a helical segment; the sequence is IIGLMVGGVVIATVIVITLVM. The Cytoplasmic segment spans residues 704-751; the sequence is LKKKQYTSIHHGVVEVDAAVTPEERHLSKMQQNGYENPTYKFFEQMQN. A Basolateral sorting signal motif is present at residues 705–715; the sequence is KKKQYTSIHHG. Residue T710 is modified to Phosphothreonine. S711 is modified (phosphoserine; by APP-kinase I). An interaction with G(o)-alpha region spans residues 713 to 732; the sequence is HHGVVEVDAAVTPEERHLSK. T724 carries the phosphothreonine; by CDK5 and MAPK10 modification. Residues 737 to 751 form a required for the interaction with KIF5B and for anterograde transport in axons region; the sequence is GYENPTYKFFEQMQN. Phosphotyrosine; by ABL1 is present on Y738. A YENPXY motif; contains endocytosis signal motif is present at residues 738-743; sequence YENPTY. K744 participates in a covalent cross-link: Glycyl lysine isopeptide (Lys-Gly) (interchain with G-Cter in ubiquitin).

This sequence belongs to the APP family. Binds, via its C-terminus, to the PID domain of several cytoplasmic proteins, including APBB family members, the APBA family, MAPK8IP1, SHC1 and NUMB and DAB1. Binding to DAB1 inhibits its serine phosphorylation. Interacts (via NPXY motif) with DAB2 (via PID domain); the interaction is impaired by tyrosine phosphorylation of the NPXY motif. Also interacts with GPCR-like protein BPP, APPBP1, IB1, KNS2 (via its TPR domains), APPBP2 (via BaSS) and DDB1. In vitro, it binds MAPT via the MT-binding domains. Associates with microtubules in the presence of ATP and in a kinesin-dependent manner. Interacts, through a C-terminal domain, with GNAO1. Amyloid-beta protein 42 binds CHRNA7 in hippocampal neurons. Amyloid-beta associates with HADH2. Interacts with CPEB1, ANKS1B and AGER. Interacts with ITM2B. Interacts with ITM2C. Interacts with IDE. Can form homodimers; dimerization is enhanced in the presence of Cu(2+) ions. Can form homodimers; this is promoted by heparin binding. Amyloid-beta protein 40 interacts with S100A9. CTF-alpha product of APP interacts with GSAP. Isoform APP695 interacts with SORL1 (via N-terminal ectodomain); this interaction retains APP in the trans-Golgi network and reduces processing into soluble APP-alpha and amyloid-beta peptides. Isoform APP770 interacts with SORL1. The C99 fragment also interacts with SORL1. Interacts with PLD3. Interacts with VDAC1. Interacts with NSG1; could regulate APP processing. Amyloid-beta protein 42 interacts with FPR2. Interacts (via transmembrane region) with PSEN1; the interaction is direct. Interacts with LRRK2. Interacts (via cytoplasmic domain) with KIF5B. Interacts (via C-terminus) with APBB2/FE65L1 (via C-terminus). Interacts (via intracellular domain) with APBB3. In terms of processing, proteolytically processed under normal cellular conditions. Cleavage either by alpha-secretase, beta-secretase or theta-secretase leads to generation and extracellular release of soluble APP peptides, S-APP-alpha and S-APP-beta, and the retention of corresponding membrane-anchored C-terminal fragments, C80, C83 and C99. Subsequent processing of C80 and C83 by gamma-secretase yields P3 peptides. This is the major secretory pathway and is non-amyloidogenic. Alternatively, presenilin/nicastrin-mediated gamma-secretase processing of C99 releases the amyloid-beta proteins, amyloid-beta protein 40 and amyloid-beta protein 42, major components of amyloid plaques, and the cytotoxic C-terminal fragments, gamma-CTF(50), gamma-CTF(57) and gamma-CTF(59). PSEN1 cleavage is more efficient with C83 than with C99 as substrate (in vitro). Amyloid-beta protein 40 and Amyloid-beta protein 42 are cleaved by ACE. Many other minor amyloid-beta peptides, amyloid-beta 1-X peptides, are found in cerebral spinal fluid (CSF) including the amyloid-beta X-15 peptides, produced from the cleavage by alpha-secretase. Proteolytically cleaved by caspases during neuronal apoptosis. Cleavage at Asp-720 by either caspase-3, -8 or -9 results in the production of the neurotoxic C31 peptide and the increased production of amyloid-beta peptides. Post-translationally, N- and O-glycosylated. In terms of processing, phosphorylation in the C-terminal on tyrosine, threonine and serine residues is neuron-specific. Phosphorylation can affect APP processing, neuronal differentiation and interaction with other proteins. Phosphorylated on Thr-724 in neuronal cells by Cdc5 kinase and Mapk10, in dividing cells by Cdc2 kinase in a cell-cycle dependent manner with maximal levels at the G2/M phase and, in vitro, by GSK-3-beta. The Thr-724 phosphorylated form causes a conformational change which reduces binding of Fe65 family members. In dopaminergic (DA) neurons, phosphorylation on Thr-724 by LRKK2 promotes the production and the nuclear translocation of the APP intracellular domain (AICD) which induces DA neuron apoptosis. Phosphorylation on Tyr-738 is required for SHC binding. Phosphorylated in the extracellular domain by casein kinases on both soluble and membrane-bound APP. This phosphorylation is inhibited by heparin. Trophic-factor deprivation triggers the cleavage of surface APP by beta-secretase to release sAPP-beta which is further cleaved to release an N-terminal fragment of APP (N-APP). Post-translationally, amyloid-beta peptides are degraded by IDE. In terms of processing, sulfated on tyrosine residues.

Its subcellular location is the cell membrane. The protein localises to the membrane. It is found in the perikaryon. The protein resides in the cell projection. It localises to the growth cone. Its subcellular location is the clathrin-coated pit. The protein localises to the early endosome. It is found in the cytoplasmic vesicle. The protein resides in the endoplasmic reticulum. It localises to the golgi apparatus. Its subcellular location is the secreted. The protein localises to the cell surface. It is found in the nucleus. The protein resides in the cytoplasm. In terms of biological role, functions as a cell surface receptor and performs physiological functions on the surface of neurons relevant to neurite growth, neuronal adhesion and axonogenesis. Interaction between APP molecules on neighboring cells promotes synaptogenesis. Involved in cell mobility and transcription regulation through protein-protein interactions. Can promote transcription activation through binding to APBB1-KAT5 and inhibit Notch signaling through interaction with Numb. Couples to apoptosis-inducing pathways such as those mediated by G(o) and JIP. Inhibits G(o)-alpha ATPase activity. Acts as a kinesin I membrane receptor, mediating the axonal transport of beta-secretase and presenilin 1. By acting as a kinesin I membrane receptor, plays a role in axonal anterograde transport of cargo towards synapses in axons. May be involved in copper homeostasis/oxidative stress through copper ion reduction. In vitro, copper-metallated APP induces neuronal death directly or is potentiated through Cu(2+)-mediated low-density lipoprotein oxidation. Can regulate neurite outgrowth through binding to components of the extracellular matrix such as heparin and collagen I and IV. Induces a AGER-dependent pathway that involves activation of p38 MAPK, resulting in internalization of amyloid-beta peptide and mitochondrial dysfunction in cultured cortical neurons. Provides Cu(2+) ions for GPC1 which are required for release of nitric oxide (NO) and subsequent degradation of the heparan sulfate chains on GPC1. Its function is as follows. Amyloid-beta peptides are lipophilic metal chelators with metal-reducing activity. Binds transient metals such as copper, zinc and iron. The gamma-CTF peptides as well as the caspase-cleaved peptides, including C31, are potent enhancers of neuronal apoptosis. The polypeptide is Amyloid-beta precursor protein (Saimiri sciureus (Common squirrel monkey)).